The following is a 217-amino-acid chain: Probable transaldolase (217 aa).

K83 (schiff-base intermediate with substrate) is an active-site residue.

This sequence belongs to the transaldolase family. Type 3B subfamily.

Its subcellular location is the cytoplasm. It catalyses the reaction D-sedoheptulose 7-phosphate + D-glyceraldehyde 3-phosphate = D-erythrose 4-phosphate + beta-D-fructose 6-phosphate. Its pathway is carbohydrate degradation; pentose phosphate pathway; D-glyceraldehyde 3-phosphate and beta-D-fructose 6-phosphate from D-ribose 5-phosphate and D-xylulose 5-phosphate (non-oxidative stage): step 2/3. Transaldolase is important for the balance of metabolites in the pentose-phosphate pathway. The protein is Probable transaldolase of Jannaschia sp. (strain CCS1).